The following is a 469-amino-acid chain: UDP-N-acetylmuramoylalanine--D-glutamate ligase (469 aa).

Residue 123-129 (GTNGKST) participates in ATP binding.

The protein belongs to the MurCDEF family.

The protein localises to the cytoplasm. The enzyme catalyses UDP-N-acetyl-alpha-D-muramoyl-L-alanine + D-glutamate + ATP = UDP-N-acetyl-alpha-D-muramoyl-L-alanyl-D-glutamate + ADP + phosphate + H(+). It participates in cell wall biogenesis; peptidoglycan biosynthesis. Functionally, cell wall formation. Catalyzes the addition of glutamate to the nucleotide precursor UDP-N-acetylmuramoyl-L-alanine (UMA). The sequence is that of UDP-N-acetylmuramoylalanine--D-glutamate ligase from Caulobacter sp. (strain K31).